Reading from the N-terminus, the 79-residue chain is Polcalcin Bra r 1 (79 aa).

EF-hand domains follow at residues Met-1–Val-36 and Asp-39–Leu-71. Residues Asp-14, Asp-16, Asp-18, Lys-20, Glu-25, Asp-49, Asp-51, Asp-53, Asn-55, and Glu-60 each coordinate Ca(2+).

This chain is Polcalcin Bra r 1, found in Brassica campestris (Field mustard).